Reading from the N-terminus, the 316-residue chain is Vacuolar morphogenesis protein 7 (316 aa).

Positions 1-124 constitute a PX domain; it reads MAANSVGKMS…QDFLQLSKPN (124 aa). Positions 168–186 form a coiled coil; the sequence is RARTKLHKLRERLEQDVQK. The region spanning 250 to 312 is the t-SNARE coiled-coil homology domain; it reads MQMVRDQEQE…QIANKKARHF (63 aa).

Possibly multimeric. Associates with VAM3.

It is found in the vacuole. In terms of biological role, essential for proper morphogenesis of the vacuole. May exist as structural reinforcement on the surface of the vacuolar membrane and be required for maintenance against rupture by osmotic pressure. This Saccharomyces cerevisiae (strain ATCC 204508 / S288c) (Baker's yeast) protein is Vacuolar morphogenesis protein 7 (VAM7).